A 491-amino-acid polypeptide reads, in one-letter code: UDP-N-acetylmuramate--L-alanine ligase (491 aa).

126–132 provides a ligand contact to ATP; it reads GTHGKTT.

The protein belongs to the MurCDEF family.

The protein localises to the cytoplasm. It carries out the reaction UDP-N-acetyl-alpha-D-muramate + L-alanine + ATP = UDP-N-acetyl-alpha-D-muramoyl-L-alanine + ADP + phosphate + H(+). Its pathway is cell wall biogenesis; peptidoglycan biosynthesis. In terms of biological role, cell wall formation. This Salmonella gallinarum (strain 287/91 / NCTC 13346) protein is UDP-N-acetylmuramate--L-alanine ligase.